The primary structure comprises 684 residues: Pre-mRNA-splicing factor CLF1 (684 aa).

14 HAT repeats span residues 43-75 (DWQRRKRTEYETVLKRNRLDLRQWMRYAQFEFD), 77-109 (KDIRRARSIYERALLVDHGFIPLWIQYIDSEIK), 111-143 (KNINHARNLLDRATNALPRVDKLWFKYLLLEES), 145-176 (GNQGIVRGIYTRWCSFEPGPDAWDSFIEFETR), 178-209 (LNFENVRNIYSKFVLVHPQIDTWLKWVRFEQT), 211-251 (GDIS…WEAS), 253-285 (GEYERSRTLYRLAVERWPISEALKEQQIQFEKK), 295-327 (IVIAKRKAEYEQYLKSDPYHYSTWWVYIDLVEE), 332-364 (QLTSAFQSFIELAKPKSLVKDSSWKRYIRICVR), 374-410 (NDLPTIRSVYQDILDIIPHKKFTFGKLWIMYAEFEIR), 412-443 (NNLLKARKILGVSLGKSPKPKVFKYYINLEIR), 445-477 (KEFDRVRKLYEKYIDFNPSSVQSWLDYAELEEN), 518-550 (AEYEKARELYEKYLILSRYDVNIWINQALFEST), and 584-622 (ENKHHTRAIFEKAISYFKEHNEDKKRQQVLQSLLEYEKV).

It belongs to the crooked-neck family. As to quaternary structure, associated with the spliceosome.

The protein localises to the nucleus. Functionally, involved in pre-mRNA splicing and cell cycle progression. Required for the spliceosome assembly and initiation of the DNA replication. The polypeptide is Pre-mRNA-splicing factor CLF1 (CLF1) (Kluyveromyces lactis (strain ATCC 8585 / CBS 2359 / DSM 70799 / NBRC 1267 / NRRL Y-1140 / WM37) (Yeast)).